Here is a 427-residue protein sequence, read N- to C-terminus: MAYHNHLSQDLPLHHFTDQTHHQHQQYQSDQPDPNSKPPEPHHSFQPAPNWLNSALLRNFTNTDTNPTNSNNANNNGGGVSNFLNLHVTASDSAASQASNQWLSQSHRPILHRNHSDVNDDVTVAGDSMIAAALSHDSADLKPDSILNKNEGGGGDGGVMNWQNARHKAEILAHPLYEPLLSAHVACLRIATPVDQLPRIDAQLAQSQNVVAKYSALGNGMVGDDKELDQFMRNYVLLLCSFKEQLQQHVRVHAMEAVMACWEIEQSLQSLTGVSPGEGTSATMSDDEDDQVDSDANLFDEGMEGHDSMGFGPLIPTESERSLMERVRQELKHELKQGYKEKIVDIREEILRKRRAGKLPGDTTSVLKAWWQSHSKWPYPTEEDKARLVQETGLQLKQINNWFINQRKRNWHSNPSTSTVLKSKRKR.

Disordered stretches follow at residues 19–49 (QTHH…QPAP) and 272–291 (TGVS…EDDQ). The segment covering 272-284 (TGVSPGEGTSATM) has biased composition (polar residues). Residues 330–350 (ELKHELKQGYKEKIVDIREEI) form the ELK domain. A DNA-binding region (homeobox; TALE-type) is located at residues 351-414 (LRKRRAGKLP…NQRKRNWHSN (64 aa)).

Belongs to the TALE/KNOX homeobox family. In terms of tissue distribution, maximally expressed in sepals, petals and fully expanded leaves. Also expressed in other flower organs and in developing leaves. Low level expression in stem internodes.

It localises to the nucleus. The chain is Homeobox protein knotted-1-like 3 from Malus domestica (Apple).